The sequence spans 310 residues: Metal ABC transporter substrate-binding lipoprotein ScbA (310 aa).

Residues 1–19 form the signal peptide; sequence MKKCRFLVLLLLAFVGLAA. The N-palmitoyl cysteine moiety is linked to residue Cys20. Residue Cys20 is the site of S-diacylglycerol cysteine attachment. Residues His68, His140, Glu206, and Asp281 each contribute to the a divalent metal cation site.

This sequence belongs to the bacterial solute-binding protein 9 family.

It is found in the cell membrane. In terms of biological role, part of an ATP-binding cassette (ABC) transport system involved in metal import. Binds a metal with high affinity and specificity and delivers it to the membrane permease for translocation into the cytoplasm. Part of an ATP-driven transport system for manganese. Does not exhibit adhesion properties. The chain is Metal ABC transporter substrate-binding lipoprotein ScbA (scbA) from Streptococcus cristatus.